We begin with the raw amino-acid sequence, 244 residues long: NAD reductase coq12 (244 aa).

The interval 131-158 (NPLMNSEKNSTSVEDLPGSNRTQQTSSH) is disordered. A compositionally biased stretch (polar residues) spans 132–158 (PLMNSEKNSTSVEDLPGSNRTQQTSSH).

Its subcellular location is the mitochondrion. It carries out the reaction a reduced flavin + NAD(+) = an oxidized flavin + NADH + 2 H(+). NADH-dependent flavin reductase that acts in the coenzyme Q biosynthetic pathway. Required for synthesis of the p-hydroxybenzoic acid (PHB) precursor to form a quinone backbone. This chain is NAD reductase coq12, found in Schizosaccharomyces pombe (strain 972 / ATCC 24843) (Fission yeast).